The chain runs to 1458 residues: DNA polymerase alpha catalytic subunit (1458 aa).

2 disordered regions span residues 1–25 and 89–119; these read MSDS…RKEA and DLED…SVSK. Over residues 15–25 the composition is skewed to basic and acidic residues; that stretch reads EKTEKSGRKEA. DNA-binding stretches follow at residues 650–715 and 1241–1373; these read RINS…VHQI and QFRA…ACSK. Cys-1280, Cys-1283, Cys-1307, Cys-1312, Cys-1345, Cys-1350, Cys-1368, and Cys-1371 together coordinate Zn(2+). The CysA-type zinc-finger motif lies at 1280–1310; that stretch reads CPKCGTENIYDNVFDGSGLQIEPGLKRCSKP. The short motif at 1345–1371 is the CysB motif element; sequence CEEKTCQNRTRRLPLSFSRNGPICQAC.

It belongs to the DNA polymerase type-B family. The DNA polymerase alpha complex is composed of four subunits: the catalytic subunit POLA1, the regulatory subunit POLA2, and the small and the large primase subunits PRIM1 and PRIM2 respectively. Interacts with PARP1; this interaction functions as part of the control of replication fork progression. Interacts with MCM10 and WDHD1; these interactions recruit the polymerase alpha complex to the pre-replicative complex bound to DNA. Interacts with RPA1; this interaction stabilizes the replicative complex and reduces the misincorporation rate of DNA polymerase alpha by acting as a fidelity clamp.

It localises to the nucleus. It catalyses the reaction DNA(n) + a 2'-deoxyribonucleoside 5'-triphosphate = DNA(n+1) + diphosphate. Functionally, plays an essential role in the initiation of DNA replication. During the S phase of the cell cycle, the DNA polymerase alpha complex (composed of a catalytic subunit POLA1/p180, a regulatory subunit POLA2/p70 and two primase subunits PRIM1/p49 and PRIM2/p58) is recruited to DNA at the replicative forks via direct interactions with MCM10 and WDHD1. The primase subunit of the polymerase alpha complex initiates DNA synthesis by oligomerising short RNA primers on both leading and lagging strands. These primers are initially extended by the polymerase alpha catalytic subunit and subsequently transferred to polymerase delta and polymerase epsilon for processive synthesis on the lagging and leading strand, respectively. The reason this transfer occurs is because the polymerase alpha has limited processivity and lacks intrinsic 3' exonuclease activity for proofreading error, and therefore is not well suited for replicating long complexes. In Xenopus laevis (African clawed frog), this protein is DNA polymerase alpha catalytic subunit (pola1).